A 284-amino-acid chain; its full sequence is D-tagatose-1,6-bisphosphate aldolase subunit GatY (284 aa).

The Proton donor role is filled by Asp-82. 2 residues coordinate Zn(2+): His-83 and His-180. Residue Gly-181 participates in dihydroxyacetone phosphate binding. His-208 is a Zn(2+) binding site. Dihydroxyacetone phosphate is bound by residues 209–211 (GAS) and 230–233 (NVAT).

The protein belongs to the class II fructose-bisphosphate aldolase family. TagBP aldolase GatY subfamily. Forms a complex with GatZ. Zn(2+) is required as a cofactor.

The catalysed reaction is D-tagatofuranose 1,6-bisphosphate = D-glyceraldehyde 3-phosphate + dihydroxyacetone phosphate. Its pathway is carbohydrate metabolism; D-tagatose 6-phosphate degradation; D-glyceraldehyde 3-phosphate and glycerone phosphate from D-tagatose 6-phosphate: step 2/2. Catalytic subunit of the tagatose-1,6-bisphosphate aldolase GatYZ, which catalyzes the reversible aldol condensation of dihydroxyacetone phosphate (DHAP or glycerone-phosphate) with glyceraldehyde 3-phosphate (G3P) to produce tagatose 1,6-bisphosphate (TBP). Requires GatZ subunit for full activity and stability. Is involved in the catabolism of galactitol. In Escherichia coli O6:H1 (strain CFT073 / ATCC 700928 / UPEC), this protein is D-tagatose-1,6-bisphosphate aldolase subunit GatY.